The primary structure comprises 365 residues: Eukaryotic translation initiation factor 3 subunit H (365 aa).

The region spanning 11–160 is the MPN domain; that stretch reads VKVEALVVMK…LRAFRLSPKF (150 aa).

Belongs to the eIF-3 subunit H family. As to quaternary structure, component of the eukaryotic translation initiation factor 3 (eIF-3) complex.

The protein resides in the cytoplasm. Functionally, component of the eukaryotic translation initiation factor 3 (eIF-3) complex, which is involved in protein synthesis of a specialized repertoire of mRNAs and, together with other initiation factors, stimulates binding of mRNA and methionyl-tRNAi to the 40S ribosome. The eIF-3 complex specifically targets and initiates translation of a subset of mRNAs involved in cell proliferation. The sequence is that of Eukaryotic translation initiation factor 3 subunit H from Aspergillus niger (strain ATCC MYA-4892 / CBS 513.88 / FGSC A1513).